A 171-amino-acid polypeptide reads, in one-letter code: 3-hydroxydecanoyl-[acyl-carrier-protein] dehydratase (171 aa).

Residue His70 is part of the active site.

The protein belongs to the thioester dehydratase family. FabA subfamily. Homodimer.

Its subcellular location is the cytoplasm. The enzyme catalyses a (3R)-hydroxyacyl-[ACP] = a (2E)-enoyl-[ACP] + H2O. The catalysed reaction is (3R)-hydroxydecanoyl-[ACP] = (2E)-decenoyl-[ACP] + H2O. It catalyses the reaction (2E)-decenoyl-[ACP] = (3Z)-decenoyl-[ACP]. Its pathway is lipid metabolism; fatty acid biosynthesis. Functionally, necessary for the introduction of cis unsaturation into fatty acids. Catalyzes the dehydration of (3R)-3-hydroxydecanoyl-ACP to E-(2)-decenoyl-ACP and then its isomerization to Z-(3)-decenoyl-ACP. Can catalyze the dehydratase reaction for beta-hydroxyacyl-ACPs with saturated chain lengths up to 16:0, being most active on intermediate chain length. This Azotobacter vinelandii (strain DJ / ATCC BAA-1303) protein is 3-hydroxydecanoyl-[acyl-carrier-protein] dehydratase.